Consider the following 173-residue polypeptide: Co-chaperone protein HscB homolog (173 aa).

The J domain occupies 5 to 77 (CHFALFELQP…PKRARYLLAM (73 aa)).

It belongs to the HscB family. Interacts with HscA and stimulates its ATPase activity.

Functionally, co-chaperone involved in the maturation of iron-sulfur cluster-containing proteins. Seems to help targeting proteins to be folded toward HscA. The sequence is that of Co-chaperone protein HscB homolog from Pseudomonas fluorescens (strain SBW25).